Reading from the N-terminus, the 630-residue chain is tRNA uridine 5-carboxymethylaminomethyl modification enzyme MnmG (630 aa).

FAD is bound at residue 13 to 18; that stretch reads GGGHAG. 273-287 lines the NAD(+) pocket; it reads GPRYCPSIEDKIHRF.

Belongs to the MnmG family. As to quaternary structure, homodimer. Heterotetramer of two MnmE and two MnmG subunits. Requires FAD as cofactor.

Its subcellular location is the cytoplasm. In terms of biological role, NAD-binding protein involved in the addition of a carboxymethylaminomethyl (cmnm) group at the wobble position (U34) of certain tRNAs, forming tRNA-cmnm(5)s(2)U34. The polypeptide is tRNA uridine 5-carboxymethylaminomethyl modification enzyme MnmG (Pseudomonas putida (Arthrobacter siderocapsulatus)).